The following is a 718-amino-acid chain: Phenylalanine--tRNA ligase beta subunit (718 aa).

The 115-residue stretch at 39–153 (LNEISGIKFG…IFDLESNPLK (115 aa)) folds into the tRNA-binding domain. The B5 domain maps to 386-460 (SKKTFLDLNY…RFYGLEKLKD (75 aa)). Mg(2+) is bound by residues D438, D444, and D448.

The protein belongs to the phenylalanyl-tRNA synthetase beta subunit family. Type 1 subfamily. As to quaternary structure, tetramer of two alpha and two beta subunits. Mg(2+) is required as a cofactor.

It is found in the cytoplasm. It catalyses the reaction tRNA(Phe) + L-phenylalanine + ATP = L-phenylalanyl-tRNA(Phe) + AMP + diphosphate + H(+). This chain is Phenylalanine--tRNA ligase beta subunit, found in Mesomycoplasma hyopneumoniae (strain 232) (Mycoplasma hyopneumoniae).